A 372-amino-acid chain; its full sequence is Chorismate synthase (372 aa).

NADP(+)-binding residues include Arg48 and Arg54. FMN-binding positions include 125–127 (RSS), 238–239 (NA), Gly278, 293–297 (KPTSS), and Arg319.

The protein belongs to the chorismate synthase family. Homotetramer. FMNH2 is required as a cofactor.

It catalyses the reaction 5-O-(1-carboxyvinyl)-3-phosphoshikimate = chorismate + phosphate. It functions in the pathway metabolic intermediate biosynthesis; chorismate biosynthesis; chorismate from D-erythrose 4-phosphate and phosphoenolpyruvate: step 7/7. Its function is as follows. Catalyzes the anti-1,4-elimination of the C-3 phosphate and the C-6 proR hydrogen from 5-enolpyruvylshikimate-3-phosphate (EPSP) to yield chorismate, which is the branch point compound that serves as the starting substrate for the three terminal pathways of aromatic amino acid biosynthesis. This reaction introduces a second double bond into the aromatic ring system. The polypeptide is Chorismate synthase (Xylella fastidiosa (strain 9a5c)).